The following is a 236-amino-acid chain: Small ribosomal subunit protein uS3 (236 aa).

A KH type-2 domain is found at 39–107 (IRSYVLEELR…ETSLNIVEIR (69 aa)). A disordered region spans residues 214–236 (ASERRATEADQSGSSSNRRRENA).

This sequence belongs to the universal ribosomal protein uS3 family. In terms of assembly, part of the 30S ribosomal subunit. Forms a tight complex with proteins S10 and S14.

Binds the lower part of the 30S subunit head. Binds mRNA in the 70S ribosome, positioning it for translation. The chain is Small ribosomal subunit protein uS3 from Bartonella tribocorum (strain CIP 105476 / IBS 506).